The chain runs to 481 residues: Delta(14)-sterol reductase ERG24B (481 aa).

Transmembrane regions (helical) follow at residues phenylalanine 11–leucine 31, leucine 80–leucine 100, leucine 125–isoleucine 145, tyrosine 149–leucine 169, threonine 244–leucine 264, isoleucine 279–leucine 299, histidine 313–phenylalanine 333, and alanine 427–isoleucine 447.

This sequence belongs to the ERG4/ERG24 family.

It localises to the endoplasmic reticulum membrane. It catalyses the reaction 4,4-dimethyl-5alpha-cholesta-8,24-dien-3beta-ol + NADP(+) = 4,4-dimethyl-5alpha-cholesta-8,14,24-trien-3beta-ol + NADPH + H(+). The protein operates within steroid metabolism; ergosterol biosynthesis. Delta(14)-sterol reductase; part of the third module of ergosterol biosynthesis pathway that includes the late steps of the pathway. Catalyzes the reduction of the C14=C15 double bond within 4,4,24-trimethyl ergosta-8,14,24(28)-trienolto produce 4,4-dimethylfecosterol. The third module or late pathway involves the ergosterol synthesis itself through consecutive reactions that mainly occur in the endoplasmic reticulum (ER) membrane. Firstly, the squalene synthase ERG9 catalyzes the condensation of 2 farnesyl pyrophosphate moieties to form squalene, which is the precursor of all steroids. Squalene synthase is crucial for balancing the incorporation of farnesyl diphosphate (FPP) into sterol and nonsterol isoprene synthesis. Secondly, squalene is converted into lanosterol by the consecutive action of the squalene epoxidase ERG1 and the lanosterol synthase ERG7. Then, the delta(24)-sterol C-methyltransferase ERG6 methylates lanosterol at C-24 to produce eburicol. Eburicol is the substrate of the sterol 14-alpha demethylase encoded by CYP51A, CYP51B and CYP51C, to yield 4,4,24-trimethyl ergosta-8,14,24(28)-trienol. CYP51B encodes the enzyme primarily responsible for sterol 14-alpha-demethylation, and plays an essential role in ascospore formation. CYP51A encodes an additional sterol 14-alpha-demethylase, induced on ergosterol depletion and responsible for the intrinsic variation in azole sensitivity. The third CYP51 isoform, CYP51C, does not encode a sterol 14-alpha-demethylase, but is required for full virulence on host wheat ears. The C-14 reductase ERG24 then reduces the C14=C15 double bond which leads to 4,4-dimethylfecosterol. A sequence of further demethylations at C-4, involving the C-4 demethylation complex containing the C-4 methylsterol oxidases ERG25, the sterol-4-alpha-carboxylate 3-dehydrogenase ERG26 and the 3-keto-steroid reductase ERG27, leads to the production of fecosterol via 4-methylfecosterol. ERG28 has a role as a scaffold to help anchor ERG25, ERG26 and ERG27 to the endoplasmic reticulum. The C-8 sterol isomerase ERG2 then catalyzes the reaction which results in unsaturation at C-7 in the B ring of sterols and thus converts fecosterol to episterol. The sterol-C5-desaturases ERG3A and ERG3BB then catalyze the introduction of a C-5 double bond in the B ring to produce 5-dehydroepisterol. The C-22 sterol desaturases ERG5A and ERG5B further convert 5-dehydroepisterol into ergosta-5,7,22,24(28)-tetraen-3beta-ol by forming the C-22(23) double bond in the sterol side chain. Finally, ergosta-5,7,22,24(28)-tetraen-3beta-ol is substrate of the C-24(28) sterol reductase ERG4 to produce ergosterol. The chain is Delta(14)-sterol reductase ERG24B from Gibberella zeae (strain ATCC MYA-4620 / CBS 123657 / FGSC 9075 / NRRL 31084 / PH-1) (Wheat head blight fungus).